The primary structure comprises 439 residues: MTCDDFRAEDEQPIEVDERRRRLKRKANDDDDDDETVRERVDDAESSMEVFEAEYPPILDPLQDQREAKYFRERMQRFDLYSRTTGLSVDDIDWPLIRGRSLQKGRVAGISFVYDDTRYPINRFSDTWLLCVTKQKLFSFGAGCVEDLNITSFVLRRTMKVLSTYCNWLFEAAKRNNRRHITHKEIQELINRDGFRFHQYLQKFLIGRGMEYTEYNNRFFKYLHEEYNKNPGGLETIYSNQDFIAKETAQANYIYDTVRAKYGGFEELPLFRHALKISFTQPGEHYFSRFYAKRFHEALGCPPLDSEIIMILDWFGVLIMNQIAYKTIRWHEEEYNDGSFPVLDSYHKALADESKCPKACLISISLFPDDPLFDLDIDYGTNPPPVNTAYQKVRRTPRDPTPFYRLMEFEDYKSCLVKMHFNFSELTGEWLRKICARGR.

Residues Arg-21–Glu-45 are disordered.

As to quaternary structure, component of a complex containing fem-1, fem-2 and fem-3. Interacts with fem-1 and fem-2 (via N-terminus). Part of a E3 ubiquitin-protein ligase complex, at least composed of cul-2, elc-1, tra-1, fem-1, fem-2 and fem-3; mediates the ubiquitination and subsequent proteasomal degradation of tra-1. Interacts with tra-1. Interacts with sel-10. Interacts with tra-2.

Its function is as follows. Required for male development. In XO (male) animals, fem-3 directs male differentiation in all tissues. In XX (hermaphrodite) animals, it specifies the first 80 or so germ cells to be sperm. Negatively regulates male development when bound to tra-2. Together with fem-2 associates with the CBC(fem-1) E3 ubiquitin-protein ligase complex which mediates the ubiquitination and subsequent proteasomal degradation of tra-1. The polypeptide is Sex-determination protein fem-3 (Caenorhabditis remanei (Caenorhabditis vulgaris)).